Here is a 349-residue protein sequence, read N- to C-terminus: tRNA uridine(34) hydroxylase (349 aa).

A Rhodanese domain is found at 146 to 240; the sequence is DDPDAVFIDM…YARKAREQGL (95 aa). Residue Cys-200 is the Cysteine persulfide intermediate of the active site. Positions 314–328 are enriched in basic and acidic residues; sequence PEEEQRRRRAGRENG. The disordered stretch occupies residues 314–349; sequence PEEEQRRRRAGRENGNKIFNKSRGRLNTTLGIPDPE.

It belongs to the TrhO family.

It catalyses the reaction uridine(34) in tRNA + AH2 + O2 = 5-hydroxyuridine(34) in tRNA + A + H2O. Functionally, catalyzes oxygen-dependent 5-hydroxyuridine (ho5U) modification at position 34 in tRNAs. This chain is tRNA uridine(34) hydroxylase, found in Cronobacter sakazakii (strain ATCC BAA-894) (Enterobacter sakazakii).